The chain runs to 611 residues: Threonine--tRNA ligase (611 aa).

Residues 1-145 (MRLLLIHSDH…TILPGEGAAA (145 aa)) form an editing domain region. A catalytic region spans residues 195–487 (VHVDLMRAKE…TAAQEVPSFP (293 aa)). Residues Cys-287, His-339, and His-460 each coordinate Zn(2+).

It belongs to the class-II aminoacyl-tRNA synthetase family. Homodimer. The cofactor is Zn(2+).

The protein localises to the cytoplasm. It carries out the reaction tRNA(Thr) + L-threonine + ATP = L-threonyl-tRNA(Thr) + AMP + diphosphate + H(+). In terms of biological role, catalyzes the attachment of threonine to tRNA(Thr) in a two-step reaction: L-threonine is first activated by ATP to form Thr-AMP and then transferred to the acceptor end of tRNA(Thr). Also edits incorrectly charged L-seryl-tRNA(Thr). This chain is Threonine--tRNA ligase, found in Methanoculleus marisnigri (strain ATCC 35101 / DSM 1498 / JR1).